Consider the following 227-residue polypeptide: A-type potassium channel modulatory protein KCNIP1 (227 aa).

The EF-hand 1; degenerate domain maps to 38-94 (LEMTMVCHRPEGLEQLEAQTNFTKRELQVLYRGFKNECPSGVVNEETFKQIYAQFFP). EF-hand domains are found at residues 97–132 (DASTYAHYLFNAFDTTQTGSVKFEDFVTALSILLRG), 133–168 (TVHEKLRWTFNLYDINKDGYINKEEMMDIVKAIYDM), and 181–216 (TPRQHVDVFFQKMDKNKDGIVTLDEFLESCQEDDNI). Ca(2+) contacts are provided by D146, N148, D150, Y152, E157, D194, N196, D198, and E205. The segment at 214-227 (DNIMRSLQLFQNVM) is interaction with KCND2.

Belongs to the recoverin family. In terms of assembly, component of heteromultimeric potassium channels. Identified in potassium channel complexes containing KCND1, KCND2, KCND3, KCNIP1, KCNIP2, KCNIP3, KCNIP4, DPP6 and DPP10. Part of a heterooctamer composed of the tetrameric channel and four KCNIP1 chains. Probably part of a complex consisting of KCNIP1, KCNIP2 isoform 3 and KCND2. Self-associates to form homodimers and homotetramers. Interacts with KCNIP2 isoform 3 in a calcium-dependent manner. Interacts with KCND2; this interaction mediates the capture of both the N- and C-terminus of KCND2, thus preventing KCND2 N-type inactivation and modulates the channel gating kinetics. Interacts with KCND3; each KCNIP1 monomer interacts with two adjacent KCND3 subunits, through both the N-terminal inactivation ball of a KCND3 subunit and a C-terminal helix from the adjacent KCND3 subunit, clamping them together; this interaction stabilizes the tetrameric form and modulates the channel gating kinetics namely channel activation and inactivation kinetics and rate of recovery from inactivation. In terms of tissue distribution, detected in hippocampus and in the molecular layer of the dentate gyrus (at protein level). Isoform 1 and isoform 2 are predominantly expressed at equal levels in brain. Colocalizes with KCND3 in inhibitory interneurons in cortex and hippocampus and in striatal interneurons.

The protein localises to the cell membrane. Its subcellular location is the cytoplasm. It localises to the cell projection. It is found in the dendrite. Functionally, regulatory subunit of Kv4/D (Shal)-type voltage-gated rapidly inactivating A-type potassium channels. Regulates channel density, inactivation kinetics and rate of recovery from inactivation in a calcium-dependent and isoform-specific manner. Modulates KCND2/Kv4.2 currents. In vitro, modulates KCND1/Kv4.1 currents. Increases the presence of KCND2 at the cell surface. This chain is A-type potassium channel modulatory protein KCNIP1, found in Rattus norvegicus (Rat).